We begin with the raw amino-acid sequence, 617 residues long: ATP-dependent RNA helicase DBP1 (617 aa).

The tract at residues 1–90 is disordered; sequence MADLPQKVSN…TSANYNRGGS (90 aa). A compositionally biased stretch (polar residues) spans 7–17; sequence KVSNLSINNKE. Positions 38 to 58 are enriched in basic and acidic residues; it reads PSFERSTPKQEDKVTGGDFFR. The segment covering 79–90 has biased composition (polar residues); the sequence is GGTSANYNRGGS. Residues 154 to 182 carry the Q motif motif; that stretch reads LDFSSPPLDELLMENIKLASFTKPTPVQK. One can recognise a Helicase ATP-binding domain in the interval 185-374; the sequence is IPIVTKGRDL…RDFLDNYIFL (190 aa). An ATP-binding site is contributed by 198 to 205; sequence AQTGSGKT. A DEAD box motif is present at residues 318–321; the sequence is DEAD. One can recognise a Helicase C-terminal domain in the interval 385-545; it reads NITQRILYVD…EVPTFLSDLS (161 aa). The disordered stretch occupies residues 542–617; the sequence is SDLSRQNSRG…GYGNSNASWW (76 aa). Residues 580–594 are compositionally biased toward polar residues; sequence FGSTRPRNTGTSNWG.

This sequence belongs to the DEAD box helicase family. DDX3/DED1 subfamily.

Its subcellular location is the cytoplasm. It carries out the reaction ATP + H2O = ADP + phosphate + H(+). In terms of biological role, ATP-binding RNA helicase involved in translation initiation. Remodels RNA in response to ADP and ATP concentrations by facilitating disruption, but also formation of RNA duplexes. Redundant to DED1, may be required in conditions in which DED1 expression is decreased. The polypeptide is ATP-dependent RNA helicase DBP1 (DBP1) (Saccharomyces cerevisiae (strain YJM789) (Baker's yeast)).